We begin with the raw amino-acid sequence, 72 residues long: Translation initiation factor IF-1 (72 aa).

In terms of domain architecture, S1-like spans 1–72 (MAKQSAIEQD…SKGRIVFRYK (72 aa)).

Belongs to the IF-1 family. In terms of assembly, component of the 30S ribosomal translation pre-initiation complex which assembles on the 30S ribosome in the order IF-2 and IF-3, IF-1 and N-formylmethionyl-tRNA(fMet); mRNA recruitment can occur at any time during PIC assembly.

It localises to the cytoplasm. Functionally, one of the essential components for the initiation of protein synthesis. Stabilizes the binding of IF-2 and IF-3 on the 30S subunit to which N-formylmethionyl-tRNA(fMet) subsequently binds. Helps modulate mRNA selection, yielding the 30S pre-initiation complex (PIC). Upon addition of the 50S ribosomal subunit IF-1, IF-2 and IF-3 are released leaving the mature 70S translation initiation complex. This Bacteroides fragilis (strain ATCC 25285 / DSM 2151 / CCUG 4856 / JCM 11019 / LMG 10263 / NCTC 9343 / Onslow / VPI 2553 / EN-2) protein is Translation initiation factor IF-1.